Here is a 452-residue protein sequence, read N- to C-terminus: Isocitrate dehydrogenase [NADP], mitochondrial (452 aa).

The N-terminal 39 residues, 1–39 (MAGYLRAVSSLCRASGSTRTWAPAALNVPSWPEQPRRHY), are a transit peptide targeting the mitochondrion. Lysine 45, lysine 48, lysine 67, and lysine 69 each carry N6-acetyllysine. An N6-acetyllysine; alternate mark is found at lysine 80 and lysine 106. N6-succinyllysine; alternate is present on residues lysine 80 and lysine 106. NADP(+) is bound by residues 115 to 117 (TIT) and arginine 122. Position 117 (threonine 117) interacts with D-threo-isocitrate. D-threo-isocitrate is bound by residues 134–140 (SPNGTIR) and arginine 149. Residue lysine 155 is modified to N6-acetyllysine. Residue lysine 166 is modified to N6-acetyllysine; alternate. Residue lysine 166 is modified to N6-succinyllysine; alternate. Arginine 172 is a binding site for D-threo-isocitrate. 2 positions are modified to N6-acetyllysine; alternate: lysine 180 and lysine 193. An N6-succinyllysine; alternate mark is found at lysine 180 and lysine 193. N6-acetyllysine is present on lysine 199. Residue lysine 256 is modified to N6-acetyllysine; alternate. Lysine 256 carries the N6-succinyllysine; alternate modification. N6-acetyllysine occurs at positions 263, 272, 275, and 280. Lysine 282 carries the N6-acetyllysine; alternate modification. An N6-succinyllysine; alternate modification is found at lysine 282. A Mn(2+)-binding site is contributed by aspartate 291. NADP(+) is bound at residue lysine 299. Aspartate 314 provides a ligand contact to Mn(2+). NADP(+)-binding positions include 349 to 354 (GTVTRH) and asparagine 367. The residue at position 384 (lysine 384) is an N6-acetyllysine; alternate. An N6-succinyllysine; alternate modification is found at lysine 384. 3 positions are modified to N6-acetyllysine: lysine 400, lysine 413, and lysine 442.

This sequence belongs to the isocitrate and isopropylmalate dehydrogenases family. In terms of assembly, homodimer. The cofactor is Mg(2+). Mn(2+) serves as cofactor. Post-translationally, acetylation at Lys-413 dramatically reduces catalytic activity. Deacetylated by SIRT3.

The protein resides in the mitochondrion. It catalyses the reaction D-threo-isocitrate + NADP(+) = 2-oxoglutarate + CO2 + NADPH. In terms of biological role, plays a role in intermediary metabolism and energy production. It may tightly associate or interact with the pyruvate dehydrogenase complex. This chain is Isocitrate dehydrogenase [NADP], mitochondrial (Idh2), found in Rattus norvegicus (Rat).